A 365-amino-acid polypeptide reads, in one-letter code: uncharacterized protein (365 aa).

Belongs to the NAD(P)-dependent epimerase/dehydratase family.

Its subcellular location is the cytoplasm. It localises to the nucleus. This is an uncharacterized protein from Schizosaccharomyces pombe (strain 972 / ATCC 24843) (Fission yeast).